A 331-amino-acid polypeptide reads, in one-letter code: Probable allantoicase (331 aa).

It belongs to the allantoicase family.

It catalyses the reaction allantoate + H2O = (S)-ureidoglycolate + urea. It participates in nitrogen metabolism; (S)-allantoin degradation; (S)-ureidoglycolate from allantoate (aminidohydrolase route): step 1/1. This Pseudomonas syringae pv. syringae (strain B728a) protein is Probable allantoicase.